The primary structure comprises 845 residues: ATPase morc-1 (845 aa).

Residues Asn-43, 88–90 (SAK), and 97–103 (RYGNGLK) each bind ATP. Asn-43 provides a ligand contact to Mg(2+). A coiled-coil region spans residues 284–311 (AAYNKILDEKNETVKKCEEEKALVMSEI). Lys-422 contributes to the ATP binding site. Disordered stretches follow at residues 566–590 (LPQK…SASS) and 628–739 (KMEP…GKAV). Residues 574–590 (SAPSSSDSQNSIRSASS) are compositionally biased toward low complexity. Residues 637–646 (HDSHIAEVQR) show a composition bias toward basic and acidic residues.

As to quaternary structure, predominantly forms monomers and dimers, but multimerizes to form trimers and tetramers upon DNA binding. As to expression, expressed in germline and somatic cells.

The protein localises to the nucleus. It localises to the nuclear body. The catalysed reaction is ATP + H2O = ADP + phosphate + H(+). Binds non-specifically to DNA and forms static foci which grow by recruiting other morc-1 molecules, and thereby stimulates conformational changes and compaction of DNA, which appears to be enhanced by ATP-binding, but does not require ATP activity. Preferentially binds to long DNAs. Compacts and entraps segments of DNA by sequentially forming loops along the DNA, beginning at the free ends of single- and double-tethered DNA. Does not extrude the DNA loops on compacted double-tethered DNA. Involved in gene silencing. Plays a role in germline RNA interference (RNAi), and in particular, the silencing of endogenous small interfering RNA (endo-siRNA) target genes. May play a role in heterochromatin localization and condensation, and the siRNAi-directed trimethylation of 'Lys-9' of histone H3 in hermaphrodite X chromosomes. Promotes transgenerational epigenetic inheritance and germline immortality. This Caenorhabditis elegans protein is ATPase morc-1.